Consider the following 237-residue polypeptide: Bax inhibitor 1 (237 aa).

At 1 to 29 (MNIFDRKINFDALLKFSHITPSTQQHLKK) the chain is on the cytoplasmic side. Residue Lys7 forms a Glycyl lysine isopeptide (Lys-Gly) (interchain with G-Cter in ubiquitin) linkage. A helical membrane pass occupies residues 30 to 50 (VYASFALCMFVAAAGAYVHMV). The Lumenal segment spans residues 51–52 (TH). The helical transmembrane segment at 53–73 (FIQAGLLSALGSLILMIWLMA) threads the bilayer. Over 74–86 (TPHSHETEQKRLG) the chain is Cytoplasmic. The chain crosses the membrane as a helical span at residues 87–107 (LLAGFAFLTGVGLGPALEFCI). The Lumenal segment spans residues 108–112 (AVNPS). The helical transmembrane segment at 113–133 (ILPTAFMGTAMIFTCFTLSAL) threads the bilayer. Residues 134–139 (YARRRS) lie on the Cytoplasmic side of the membrane. A helical transmembrane segment spans residues 140–160 (YLFLGGILMSALSLLLLSSLG). Residues 161 to 166 (NVFFGS) are Lumenal-facing. Residues 167–187 (IWLFQANLYVGLVVMCGFVLF) form a helical membrane-spanning segment. Residues 188–206 (DTQLIIEKAEHGDQDYIWH) are Cytoplasmic-facing. Residues 207–227 (CIDLFLDFITVFRKLMMILAM) constitute an intramembrane region (helical). The Cytoplasmic portion of the chain corresponds to 228–237 (NEKDKKKEKK).

This sequence belongs to the BI1 family. Interacts with BCL2 and BCL2L1. Interacts with ERN1. In terms of processing, ubiquitinated by BFAR, leading to proteasomal degradation. In terms of tissue distribution, highly abundant in testis.

Its subcellular location is the endoplasmic reticulum membrane. Functionally, endoplasmic reticulum (ER)-resident protein that confers cellular protection as an anti-apoptotic protein by limiting multiple stress-inducing pathways surrounding the endoplasmic reticulum and mitochondria. Inhibits the activities of the key sensor for the endoplasmic reticulum unfolded protein response IRE1alpha/ERN1 both directly and by blocking BAX/BAK binding. Modulates ER calcium homeostasis by acting as a calcium-leak channel. Negatively regulates autophagy and autophagosome formation, especially during periods of nutrient deprivation, and reduces cell survival during starvation. In Homo sapiens (Human), this protein is Bax inhibitor 1 (TMBIM6).